A 437-amino-acid polypeptide reads, in one-letter code: UDP-N-acetylmuramate--L-alanine ligase (437 aa).

114–120 (GTHGKTS) provides a ligand contact to ATP.

The protein belongs to the MurCDEF family.

The protein resides in the cytoplasm. The catalysed reaction is UDP-N-acetyl-alpha-D-muramate + L-alanine + ATP = UDP-N-acetyl-alpha-D-muramoyl-L-alanine + ADP + phosphate + H(+). It participates in cell wall biogenesis; peptidoglycan biosynthesis. In terms of biological role, cell wall formation. The polypeptide is UDP-N-acetylmuramate--L-alanine ligase (Lactobacillus acidophilus (strain ATCC 700396 / NCK56 / N2 / NCFM)).